The chain runs to 256 residues: Triosephosphate isomerase (256 aa).

9–11 is a binding site for substrate; that stretch reads NWK. Residue histidine 97 is the Electrophile of the active site. Glutamate 169 (proton acceptor) is an active-site residue. Substrate-binding positions include glycine 175, serine 214, and 235-236; that span reads GG.

This sequence belongs to the triosephosphate isomerase family. In terms of assembly, homodimer.

The protein resides in the cytoplasm. It carries out the reaction D-glyceraldehyde 3-phosphate = dihydroxyacetone phosphate. Its pathway is carbohydrate biosynthesis; gluconeogenesis. The protein operates within carbohydrate degradation; glycolysis; D-glyceraldehyde 3-phosphate from glycerone phosphate: step 1/1. Its function is as follows. Involved in the gluconeogenesis. Catalyzes stereospecifically the conversion of dihydroxyacetone phosphate (DHAP) to D-glyceraldehyde-3-phosphate (G3P). In Moritella marina (Vibrio marinus), this protein is Triosephosphate isomerase.